Reading from the N-terminus, the 220-residue chain is Translation initiation factor 6 (220 aa).

This sequence belongs to the eIF-6 family.

Binds to the 50S ribosomal subunit and prevents its association with the 30S ribosomal subunit to form the 70S initiation complex. The sequence is that of Translation initiation factor 6 from Halobacterium salinarum (strain ATCC 29341 / DSM 671 / R1).